The chain runs to 492 residues: METVETLNEGLKRNYTLTITADEIRKRIDQEVAEAAPRVNLPGFRPGKVPAKLVNKMYGASLAQDALNKALQDGVQKLLSDKGEKPAMQPEIELTEGYELGKDAELKVKFEILPEVPEISFDDLKLERLTVEADNAVIDEKIKEFAEHQKSFDDSKKDHKAENGDLVVVDFVGKVDGEPFEGGTGSDMSVELGAGQFIPGFEEQLVGAKQGESRVLKVTFPEDYSVPYLKGKDAEFDVTVSDVRVPRKAEVNDDFAKSLGLESLDQLRDLMKGQIEQELNGLTRTYMKRKLLDQLADSYSFEVPSQMVEAEFNQIWRQLEHAASHEEDSEAALAEMEKERDEYRAIAERRVRLGLALSDIGAKNNVEVSQNEMNMLISQAAQRYNPADRQRFVEYLRQDPMMAAQLRAPLYEDKVVDILFEKANITDRAVTREELEAAIEAEEDSIGKHDHDHDHKEKASDKPKAKKAAAPKKKAAPKKKAAPKAEKKSSDE.

The PPIase FKBP-type domain occupies 164 to 249 (GDLVVVDFVG…VSDVRVPRKA (86 aa)). Residues 440–492 (EAEEDSIGKHDHDHDHKEKASDKPKAKKAAAPKKKAAPKKKAAPKAEKKSSDE) are disordered. The span at 445–463 (SIGKHDHDHDHKEKASDKP) shows a compositional bias: basic and acidic residues. Over residues 464-482 (KAKKAAAPKKKAAPKKKAA) the composition is skewed to basic residues. A compositionally biased stretch (basic and acidic residues) spans 483 to 492 (PKAEKKSSDE).

Belongs to the FKBP-type PPIase family. Tig subfamily.

It is found in the cytoplasm. The catalysed reaction is [protein]-peptidylproline (omega=180) = [protein]-peptidylproline (omega=0). In terms of biological role, involved in protein export. Acts as a chaperone by maintaining the newly synthesized protein in an open conformation. Functions as a peptidyl-prolyl cis-trans isomerase. The sequence is that of Trigger factor from Zymomonas mobilis subsp. mobilis (strain ATCC 31821 / ZM4 / CP4).